The chain runs to 47 residues: Potassium channel toxin alpha-KTx 7.1 (47 aa).

Positions 1-12 are cleaved as a signal peptide; that stretch reads RGSVDYKDDDDK. Intrachain disulfides connect Cys-16–Cys-37, Cys-22–Cys-42, and Cys-26–Cys-44.

Belongs to the short scorpion toxin superfamily. Potassium channel inhibitor family. Alpha-KTx 07 subfamily. In terms of tissue distribution, expressed by the venom gland.

It is found in the secreted. Functionally, potent inhibitor of the A-type voltage-gated potassium channels. Most potent inhibitor of Kv1.2/KCNA2 channels. Reversibly block the Shaker B potassium-channels (Kv1.1 sub-family). The sequence is that of Potassium channel toxin alpha-KTx 7.1 (PTX-1) from Pandinus imperator (Emperor scorpion).